The chain runs to 135 residues: Mediator of RNA polymerase II transcription subunit 10 (135 aa).

It belongs to the Mediator complex subunit 10 family. As to quaternary structure, component of the Mediator complex, which is composed of MED1, MED4, MED6, MED7, MED8, MED9, MED10, MED11, MED12, MED13, MED13L, MED14, MED15, MED16, MED17, MED18, MED19, MED20, MED21, MED22, MED23, MED24, MED25, MED26, MED27, MED29, MED30, MED31, CCNC, CDK8 and CDC2L6/CDK11. The MED12, MED13, CCNC and CDK8 subunits form a distinct module termed the CDK8 module. Mediator containing the CDK8 module is less active than Mediator lacking this module in supporting transcriptional activation. Individual preparations of the Mediator complex lacking one or more distinct subunits have been variously termed ARC, CRSP, DRIP, PC2, SMCC and TRAP.

It is found in the nucleus. Its function is as follows. Component of the Mediator complex, a coactivator involved in the regulated transcription of nearly all RNA polymerase II-dependent genes. Mediator functions as a bridge to convey information from gene-specific regulatory proteins to the basal RNA polymerase II transcription machinery. Mediator is recruited to promoters by direct interactions with regulatory proteins and serves as a scaffold for the assembly of a functional preinitiation complex with RNA polymerase II and the general transcription factors. This is Mediator of RNA polymerase II transcription subunit 10 (Med10) from Mus musculus (Mouse).